A 267-amino-acid polypeptide reads, in one-letter code: MIKYPAFDPVAFTLGPLNIRWYGLMYILGFVAAWLLARSRALKTGSGWTVEQVDDLVTYSVFGVILGGRLGYTLFYETSYFLNNPLDIFKIWNGGMSFHGGLLGVIIAIWLFARHTGKSLFEVGDFTAPLVAPGLLAGRLGNFINGELWGRHTSAEWGMVFPGAGPLPRHPSQLYEAALEGVALFIILWLFSAKPRPRMAVSGMFLLLYGSFRFFVEFFREPDLHLGYLAFGWVTMGQILCLPMILGGLVLVGFAMKNEKQAALKTE.

7 consecutive transmembrane segments (helical) span residues 17–37 (LNIR…WLLA), 56–76 (LVTY…TLFY), 91–111 (IWNG…AIWL), 120–140 (LFEV…AGRL), 173–193 (QLYE…LFSA), 199–219 (MAVS…VEFF), and 236–256 (MGQI…GFAM). Arg139 contributes to the a 1,2-diacyl-sn-glycero-3-phospho-(1'-sn-glycerol) binding site.

The protein belongs to the Lgt family.

Its subcellular location is the cell inner membrane. It catalyses the reaction L-cysteinyl-[prolipoprotein] + a 1,2-diacyl-sn-glycero-3-phospho-(1'-sn-glycerol) = an S-1,2-diacyl-sn-glyceryl-L-cysteinyl-[prolipoprotein] + sn-glycerol 1-phosphate + H(+). It participates in protein modification; lipoprotein biosynthesis (diacylglyceryl transfer). Its function is as follows. Catalyzes the transfer of the diacylglyceryl group from phosphatidylglycerol to the sulfhydryl group of the N-terminal cysteine of a prolipoprotein, the first step in the formation of mature lipoproteins. This chain is Phosphatidylglycerol--prolipoprotein diacylglyceryl transferase, found in Oleidesulfovibrio alaskensis (strain ATCC BAA-1058 / DSM 17464 / G20) (Desulfovibrio alaskensis).